The chain runs to 576 residues: 60 kDa heat shock protein homolog 2, mitochondrial (576 aa).

The transit peptide at 1-61 (MMRMFRYTNT…AVTMGPKGRN (61 aa)) directs the protein to the mitochondrion.

This sequence belongs to the chaperonin (HSP60) family. In terms of tissue distribution, first detectable expression is seen in the posterior part of the dorsal tracheal trunk at stage 14-15, which marks the beginning of terminal tracheation. In the larval gut, expression in proventriculus is stronger than in midgut and hindgut. Malpighian tubules shows low expression and late third instar larval imaginal disks and brain showed moderate expression. In larval ovary and testis, expression is strong in the posterior region.

It localises to the mitochondrion matrix. Prevents misfolding and promotes the refolding and proper assembly of unfolded polypeptides generated under stress conditions. Essential for proper development of trachea, spermatogonia and spermatocytes. This Drosophila melanogaster (Fruit fly) protein is 60 kDa heat shock protein homolog 2, mitochondrial (Hsp60C).